We begin with the raw amino-acid sequence, 156 residues long: Oxidized purine nucleoside triphosphate hydrolase (156 aa).

The region spanning 3 to 132 (TSRLYTLVLV…WFPLLLQKKK (130 aa)) is the Nudix hydrolase domain. T8 is a binding site for 2-oxo-dATP. Residues T8, K23, N33, 35-38 (FGGK), and E52 contribute to the 8-oxo-dGTP site. Residues N33 and 35-38 (FGGK) contribute to the 2-oxo-dATP site. Residues G36, E52, E55, E56, and E100 each coordinate Mg(2+). A Nudix box motif is present at residues 37–58 (GKVQEGETIEDGAKRELLEESG). 8-oxo-dGTP is bound by residues E56, E100, and 117–120 (WPDD). 117-120 (WPDD) contacts 2-oxo-dATP.

It belongs to the Nudix hydrolase family. In terms of assembly, monomer. It depends on Mg(2+) as a cofactor. In terms of tissue distribution, high expression levels detected in thymus, liver, spleen, kidney, testis and large intestine, with lower levels detected in brain, heart, lung and stomach (at protein level). Expressed in kidney, liver and small intestine.

The protein resides in the cytoplasm. The protein localises to the nucleus. It localises to the nucleus membrane. It is found in the cytoplasmic vesicle. Its subcellular location is the secretory vesicle. The protein resides in the acrosome. The enzyme catalyses 2-oxo-dATP + H2O = 2-oxo-dAMP + diphosphate + H(+). It catalyses the reaction 2-oxo-ATP + H2O = 2-oxo-AMP + diphosphate + H(+). The catalysed reaction is 8-oxo-dGTP + H2O = 8-oxo-dGMP + diphosphate + H(+). It carries out the reaction 8-oxo-dATP + H2O = 8-oxo-dAMP + diphosphate + H(+). The enzyme catalyses O(6)-methyl-dGTP + H2O = O(6)-methyl-dGMP + diphosphate + H(+). It catalyses the reaction N(6)-methyl-dATP + H2O = N(6)-methyl-dAMP + diphosphate + H(+). The catalysed reaction is N(6)-methyl-ATP + H2O = N(6)-methyl-AMP + diphosphate + H(+). In terms of biological role, oxidized purine nucleoside triphosphate hydrolase which is a prominent sanitizer of the oxidized nucleotide pool. Catalyzes the hydrolysis of 2-oxo-dATP (2-hydroxy-dATP) into 2-oxo-dAMP. Also has a significant hydrolase activity toward 2-oxo-ATP, 8-oxo-dGTP and 8-oxo-dATP. Through the hydrolysis of oxidized purine nucleoside triphosphates, prevents their incorporation into DNA and the subsequent transversions A:T to C:G and G:C to T:A. Also catalyzes the hydrolysis of methylated purine nucleoside triphosphate preventing their integration into DNA. Through this antimutagenic activity protects cells from oxidative stress. The protein is Oxidized purine nucleoside triphosphate hydrolase (Nudt1) of Mus musculus (Mouse).